A 210-amino-acid polypeptide reads, in one-letter code: N-(5'-phosphoribosyl)anthranilate isomerase (210 aa).

The protein belongs to the TrpF family.

The enzyme catalyses N-(5-phospho-beta-D-ribosyl)anthranilate = 1-(2-carboxyphenylamino)-1-deoxy-D-ribulose 5-phosphate. It participates in amino-acid biosynthesis; L-tryptophan biosynthesis; L-tryptophan from chorismate: step 3/5. The protein is N-(5'-phosphoribosyl)anthranilate isomerase of Trichormus variabilis (strain ATCC 29413 / PCC 7937) (Anabaena variabilis).